A 243-amino-acid polypeptide reads, in one-letter code: NAD-dependent protein deacylase (243 aa).

The Deacetylase sirtuin-type domain occupies 1–234 (MYQHIVVLTG…PKLVDTILAG (234 aa)). NAD(+) is bound at residue 10–29 (GAGISAESGLRTFRDQDGLW). Substrate-binding residues include tyrosine 54 and arginine 57. 91 to 94 (QNID) provides a ligand contact to NAD(+). The active-site Proton acceptor is the histidine 109. 2 residues coordinate Zn(2+): cysteine 117 and cysteine 136. Residues 176–178 (GTS), 202–204 (NLQ), and alanine 220 each bind NAD(+).

Belongs to the sirtuin family. Class III subfamily. Requires Zn(2+) as cofactor.

It is found in the cytoplasm. It catalyses the reaction N(6)-acetyl-L-lysyl-[protein] + NAD(+) + H2O = 2''-O-acetyl-ADP-D-ribose + nicotinamide + L-lysyl-[protein]. It carries out the reaction N(6)-succinyl-L-lysyl-[protein] + NAD(+) + H2O = 2''-O-succinyl-ADP-D-ribose + nicotinamide + L-lysyl-[protein]. In terms of biological role, NAD-dependent lysine deacetylase and desuccinylase that specifically removes acetyl and succinyl groups on target proteins. Modulates the activities of several proteins which are inactive in their acylated form. The chain is NAD-dependent protein deacylase from Shewanella oneidensis (strain ATCC 700550 / JCM 31522 / CIP 106686 / LMG 19005 / NCIMB 14063 / MR-1).